Here is a 190-residue protein sequence, read N- to C-terminus: Segregation and condensation protein B (190 aa).

The protein belongs to the ScpB family. Homodimer. Homodimerization may be required to stabilize the binding of ScpA to the Smc head domains. Component of a cohesin-like complex composed of ScpA, ScpB and the Smc homodimer, in which ScpA and ScpB bind to the head domain of Smc. The presence of the three proteins is required for the association of the complex with DNA.

Its subcellular location is the cytoplasm. Participates in chromosomal partition during cell division. May act via the formation of a condensin-like complex containing Smc and ScpA that pull DNA away from mid-cell into both cell halves. The chain is Segregation and condensation protein B from Bacillus cereus (strain ATCC 10987 / NRS 248).